The following is a 261-amino-acid chain: Thioredoxin-like protein HCF164, chloroplastic (261 aa).

The N-terminal 40 residues, 1–40 (MARLVFSLNLPSSHGFNLSPRNLQSFFVTQTGAPRFRAVR), are a transit peptide targeting the chloroplast. The disordered stretch occupies residues 39 to 91 (VRCKPNPESSETKQEKLVIDNGETSSASKEVESSSSVADSSSSSSSGFPESPN). Low complexity predominate over residues 63–84 (SSASKEVESSSSVADSSSSSSS). Residues 101-229 (VTVIAALSLF…LVENVNALAA (129 aa)) enclose the Thioredoxin domain. Catalysis depends on nucleophile residues cysteine 150 and cysteine 153. Cysteine 150 and cysteine 153 are disulfide-bonded.

It belongs to the thioredoxin family. Interacts in vitro with LTO1.

It is found in the plastid. The protein resides in the chloroplast thylakoid membrane. Thiol-disulfide oxidoreductase that participates in various redox reactions in the chloroplast. Mediates the reduction of PSI-N in the thylakoid lumen. May interact and probably reduce other target proteins of the thylakoid membrane, such as FTSH2, FTSH8, LHCB5, atpA, atpB, atpE, petA and petC. Involved in the biogenesis of the plastid cytochrome b6f complex. Reducing equivalents are provided by stromal M-type thioredoxins and probably transduced through the thylakoid membrane by CCDA. Possesses low insulin disulfide bonds reducing activity. This is Thioredoxin-like protein HCF164, chloroplastic from Arabidopsis thaliana (Mouse-ear cress).